A 380-amino-acid chain; its full sequence is Cytochrome b (380 aa).

Helical transmembrane passes span Phe-33–Met-53, Trp-77–Val-98, Trp-113–Leu-133, and Phe-178–Leu-198. Residues His-83 and His-97 each coordinate heme b. Positions 182 and 196 each coordinate heme b. His-201 contributes to the a ubiquinone binding site. 4 helical membrane-spanning segments follow: residues Ile-226 to Phe-246, Leu-288 to Asn-308, Ile-320 to Gly-340, and Phe-347 to Pro-367.

Belongs to the cytochrome b family. In terms of assembly, the cytochrome bc1 complex contains 11 subunits: 3 respiratory subunits (MT-CYB, CYC1 and UQCRFS1), 2 core proteins (UQCRC1 and UQCRC2) and 6 low-molecular weight proteins (UQCRH/QCR6, UQCRB/QCR7, UQCRQ/QCR8, UQCR10/QCR9, UQCR11/QCR10 and a cleavage product of UQCRFS1). This cytochrome bc1 complex then forms a dimer. Heme b serves as cofactor.

The protein localises to the mitochondrion inner membrane. Functionally, component of the ubiquinol-cytochrome c reductase complex (complex III or cytochrome b-c1 complex) that is part of the mitochondrial respiratory chain. The b-c1 complex mediates electron transfer from ubiquinol to cytochrome c. Contributes to the generation of a proton gradient across the mitochondrial membrane that is then used for ATP synthesis. The sequence is that of Cytochrome b (MT-CYB) from Microryzomys minutus (Forest small rice rat).